Consider the following 109-residue polypeptide: NAD(P)H-quinone oxidoreductase subunit M (109 aa).

The protein belongs to the complex I NdhM subunit family. NDH-1 can be composed of about 15 different subunits; different subcomplexes with different compositions have been identified which probably have different functions.

It localises to the cellular thylakoid membrane. The enzyme catalyses a plastoquinone + NADH + (n+1) H(+)(in) = a plastoquinol + NAD(+) + n H(+)(out). The catalysed reaction is a plastoquinone + NADPH + (n+1) H(+)(in) = a plastoquinol + NADP(+) + n H(+)(out). Its function is as follows. NDH-1 shuttles electrons from an unknown electron donor, via FMN and iron-sulfur (Fe-S) centers, to quinones in the respiratory and/or the photosynthetic chain. The immediate electron acceptor for the enzyme in this species is believed to be plastoquinone. Couples the redox reaction to proton translocation, and thus conserves the redox energy in a proton gradient. Cyanobacterial NDH-1 also plays a role in inorganic carbon-concentration. In Microcystis aeruginosa (strain NIES-843 / IAM M-2473), this protein is NAD(P)H-quinone oxidoreductase subunit M.